A 364-amino-acid chain; its full sequence is Paraneoplastic antigen Ma2 homolog (364 aa).

Residue alanine 2 is modified to N-acetylalanine. The segment covering 335-353 (EEEEASFENESIEEPEEGD) has biased composition (acidic residues). Residues 335 to 364 (EEEEASFENESIEEPEEGDGYGGWNHEGDD) are disordered. Residues 354–364 (GYGGWNHEGDD) are compositionally biased toward gly residues.

It belongs to the PNMA family.

It is found in the nucleus. The protein resides in the nucleolus. The polypeptide is Paraneoplastic antigen Ma2 homolog (PNMA2) (Macaca fascicularis (Crab-eating macaque)).